Here is a 298-residue protein sequence, read N- to C-terminus: 4-diphosphocytidyl-2-C-methyl-D-erythritol kinase (298 aa).

Residue Lys25 is part of the active site. 109 to 119 contacts ATP; the sequence is PVGGGFGGGSS. Residue Asp151 is part of the active site.

It belongs to the GHMP kinase family. IspE subfamily.

The enzyme catalyses 4-CDP-2-C-methyl-D-erythritol + ATP = 4-CDP-2-C-methyl-D-erythritol 2-phosphate + ADP + H(+). It functions in the pathway isoprenoid biosynthesis; isopentenyl diphosphate biosynthesis via DXP pathway; isopentenyl diphosphate from 1-deoxy-D-xylulose 5-phosphate: step 3/6. Its function is as follows. Catalyzes the phosphorylation of the position 2 hydroxy group of 4-diphosphocytidyl-2C-methyl-D-erythritol. The chain is 4-diphosphocytidyl-2-C-methyl-D-erythritol kinase from Xylella fastidiosa (strain 9a5c).